We begin with the raw amino-acid sequence, 278 residues long: Elongation factor Ts 1, mitochondrial (278 aa).

This sequence belongs to the EF-Ts family.

The protein localises to the mitochondrion. Associates with the EF-Tu.GDP complex and induces the exchange of GDP to GTP. It remains bound to the aminoacyl-tRNA.EF-Tu.GTP complex up to the GTP hydrolysis stage on the ribosome. This chain is Elongation factor Ts 1, mitochondrial, found in Trypanosoma cruzi (strain CL Brener).